The sequence spans 429 residues: 3-phosphoshikimate 1-carboxyvinyltransferase (429 aa).

Residues lysine 23, serine 24, and arginine 28 each coordinate 3-phosphoshikimate. Residue lysine 23 participates in phosphoenolpyruvate binding. Phosphoenolpyruvate contacts are provided by glycine 97 and arginine 125. The 3-phosphoshikimate site is built by serine 170, serine 171, glutamine 172, serine 198, aspartate 314, asparagine 338, and lysine 342. Phosphoenolpyruvate is bound at residue glutamine 172. Aspartate 314 functions as the Proton acceptor in the catalytic mechanism. Phosphoenolpyruvate is bound by residues arginine 346, arginine 388, and lysine 413.

The protein belongs to the EPSP synthase family. In terms of assembly, monomer.

It is found in the cytoplasm. It catalyses the reaction 3-phosphoshikimate + phosphoenolpyruvate = 5-O-(1-carboxyvinyl)-3-phosphoshikimate + phosphate. It functions in the pathway metabolic intermediate biosynthesis; chorismate biosynthesis; chorismate from D-erythrose 4-phosphate and phosphoenolpyruvate: step 6/7. In terms of biological role, catalyzes the transfer of the enolpyruvyl moiety of phosphoenolpyruvate (PEP) to the 5-hydroxyl of shikimate-3-phosphate (S3P) to produce enolpyruvyl shikimate-3-phosphate and inorganic phosphate. This chain is 3-phosphoshikimate 1-carboxyvinyltransferase, found in Pectobacterium carotovorum subsp. carotovorum (strain PC1).